A 456-amino-acid chain; its full sequence is tRNA(Ile)-lysidine synthase (456 aa).

Position 27 to 32 (27 to 32) interacts with ATP; it reads SGGVDS.

Belongs to the tRNA(Ile)-lysidine synthase family.

Its subcellular location is the cytoplasm. It carries out the reaction cytidine(34) in tRNA(Ile2) + L-lysine + ATP = lysidine(34) in tRNA(Ile2) + AMP + diphosphate + H(+). Functionally, ligates lysine onto the cytidine present at position 34 of the AUA codon-specific tRNA(Ile) that contains the anticodon CAU, in an ATP-dependent manner. Cytidine is converted to lysidine, thus changing the amino acid specificity of the tRNA from methionine to isoleucine. The polypeptide is tRNA(Ile)-lysidine synthase (Vibrio atlanticus (strain LGP32) (Vibrio splendidus (strain Mel32))).